A 221-amino-acid polypeptide reads, in one-letter code: Veficolin-1 (221 aa).

Positions 1-25 (MTAWLDFPLALSPLVVVSMKGGSFG) are cleaved as a signal peptide. The 55-residue stretch at 50-104 (QGQAGIPGIPGVPGTNGLPGAKGDLGPQGPPGERGSTGIPGKAGPKGDKGDQGEA) folds into the Collagen-like domain. A disordered region spans residues 54 to 104 (GIPGIPGVPGTNGLPGAKGDLGPQGPPGERGSTGIPGKAGPKGDKGDQGEA). The Fibrinogen C-terminal domain maps to 111-221 (QQQEAGAKDC…DFNNSKTFAK (111 aa)). Cysteines 120 and 148 form a disulfide.

It belongs to the ficolin lectin family. Veficolin subfamily. Expressed by the mandibular venom duct.

It is found in the secreted. Functionally, initiates complement activation and/or interferes in platelet aggregation and/or blood coagulation. The polypeptide is Veficolin-1 (Varanus komodoensis (Komodo dragon)).